A 147-amino-acid polypeptide reads, in one-letter code: Hemoglobin subunit epsilon (147 aa).

Residues 3–147 form the Globin domain; sequence HFTAEEKSTI…VATALAHKYH (145 aa). Serine 14 and serine 51 each carry phosphoserine. 2 residues coordinate heme b: histidine 64 and histidine 93.

The protein belongs to the globin family. In terms of assembly, heterotetramer of two alpha chains and two epsilon chains in early embryonic hemoglobin Gower-2; two zeta chains and two epsilon chains in early embryonic hemoglobin Gower-1. As to expression, red blood cells.

In terms of biological role, the epsilon chain is a beta-type chain of early mammalian embryonic hemoglobin. This Eulemur fulvus fulvus (Brown lemur) protein is Hemoglobin subunit epsilon (HBE1).